The chain runs to 1165 residues: Leptin receptor (1165 aa).

The signal sequence occupies residues 1 to 21 (MTCPKFSVALLHWEFIYVITA). The Extracellular portion of the chain corresponds to 22–838 (FDLAYPITPW…TQDGEKHRND (817 aa)). 5 cysteine pairs are disulfide-bonded: Cys-37–Cys-90, Cys-89–Cys-99, Cys-131–Cys-142, Cys-186–Cys-196, and Cys-188–Cys-193. 5 N-linked (GlcNAc...) asparagine glycosylation sites follow: Asn-41, Asn-55, Asn-72, Asn-80, and Asn-98. Asn-187 carries an N-linked (GlcNAc...) asparagine glycan. 4 N-linked (GlcNAc...) asparagine glycosylation sites follow: Asn-206, Asn-276, Asn-347, and Asn-397. Positions 239–332 (PPLGLHMEIT…STPFTFTTQD (94 aa)) constitute a Fibronectin type-III 1 domain. Intrachain disulfides connect Cys-352/Cys-412 and Cys-413/Cys-418. Asn-433 carries an N-linked (GlcNAc...) asparagine glycan. Intrachain disulfides connect Cys-436/Cys-447, Cys-473/Cys-528, and Cys-488/Cys-498. Residues 467–484 (HRSSLYCSDVPSVHPISE) form a leptin-binding region. Fibronectin type-III domains follow at residues 539-634 (PPSS…TVVT), 642-736 (GPEF…WPMS), and 740-834 (IVQS…DGEK). Residues 622–626 (WSNWS) carry the WSXWS motif motif. Residues Asn-624, Asn-659, Asn-670, Asn-697, Asn-728, and Asn-750 are each glycosylated (N-linked (GlcNAc...) asparagine). A helical membrane pass occupies residues 839 to 861 (AGLYVIVPIIISSSILLLGTLLM). The Cytoplasmic portion of the chain corresponds to 862-1165 (SHQRMKKLFW…MENKMYDLTV (304 aa)). Positions 870 to 878 (FWEDVPNPK) match the Box 1 motif motif. A Phosphoserine modification is found at Ser-881. Residues 892-897 (ETFEHL) are required for JAK2 activation. Residues 897–905 (LFIKHTESV) form a required for STAT3 phosphorylation region. Phosphotyrosine; by JAK2 is present on Tyr-986. Tyr-1079 is modified (phosphotyrosine). A Phosphotyrosine; by JAK2 modification is found at Tyr-1141.

This sequence belongs to the type I cytokine receptor family. Type 2 subfamily. In terms of assembly, present as a mixture of monomers and dimers. The phosphorylated receptor binds a number of SH2 domain-containing proteins such as JAK2, STAT3, PTPN11, and SOCS3. Interaction with SOCS3 inhibits JAK/STAT signaling and MAPK cascade. On ligand binding, phosphorylated on two conserved C-terminal tyrosine residues by JAK2. Tyr-986 is required for complete binding and activation of PTPN11, ERK/FOS activation,for interaction with SOCS3 and SOCS3 mediated inhibition of leptin signaling. Phosphorylation on Tyr-1141 is required for STAT3 binding/activation. Phosphorylation of Tyr-1079 has a more accessory role. In terms of tissue distribution, kidney, liver, spleen, lung, brain, testis, uterus, ovary, corpus luteum, theca and granulosa cells.

It is found in the cell membrane. The protein resides in the basolateral cell membrane. Receptor for hormone LEP/leptin. On ligand binding, mediates LEP central and peripheral effects through the activation of different signaling pathways such as JAK2/STAT3 and MAPK cascade/FOS. In the hypothalamus, LEP acts as an appetite-regulating factor that induces a decrease in food intake and an increase in energy consumption by inducing anorexinogenic factors and suppressing orexigenic neuropeptides, also regulates bone mass and secretion of hypothalamo-pituitary-adrenal hormones. In the periphery, increases basal metabolism, influences reproductive function, regulates pancreatic beta-cell function and insulin secretion, is pro-angiogenic and affects innate and adaptive immunity. Control of energy homeostasis and melanocortin production (stimulation of POMC and full repression of AgRP transcription) is mediated by STAT3 signaling, whereas distinct signals regulate NPY and the control of fertility, growth and glucose homeostasis. Involved in the regulation of counter-regulatory response to hypoglycemia by inhibiting neurons of the parabrachial nucleus. Has a specific effect on T lymphocyte responses, differentially regulating the proliferation of naive and memory T-cells. Leptin increases Th1 and suppresses Th2 cytokine production. The protein is Leptin receptor (LEPR) of Sus scrofa (Pig).